A 188-amino-acid chain; its full sequence is uncharacterized protein (188 aa).

Residues 57 to 80 (NDDVAPVAEGPKQERRSPSRNIGR) form a disordered region.

This sequence belongs to the transposase 25 family.

This is an uncharacterized protein from Sinorhizobium fredii (strain NBRC 101917 / NGR234).